The primary structure comprises 218 residues: 7-cyano-7-deazaguanine synthase (218 aa).

9-19 is a binding site for ATP; that stretch reads YSGGMDSFTVL. Cysteine 185, cysteine 193, cysteine 196, and cysteine 199 together coordinate Zn(2+).

It belongs to the QueC family. Zn(2+) serves as cofactor.

It carries out the reaction 7-carboxy-7-deazaguanine + NH4(+) + ATP = 7-cyano-7-deazaguanine + ADP + phosphate + H2O + H(+). Its pathway is purine metabolism; 7-cyano-7-deazaguanine biosynthesis. In terms of biological role, catalyzes the ATP-dependent conversion of 7-carboxy-7-deazaguanine (CDG) to 7-cyano-7-deazaguanine (preQ(0)). The chain is 7-cyano-7-deazaguanine synthase from Alteromonas mediterranea (strain DSM 17117 / CIP 110805 / LMG 28347 / Deep ecotype).